A 547-amino-acid chain; its full sequence is Cytochrome P450 monooxygenase 128 (547 aa).

The helical transmembrane segment at 9-25 threads the bilayer; the sequence is IPWAAGATLLAWAAYKI. Residues N336 and N438 are each glycosylated (N-linked (GlcNAc...) asparagine). C483 lines the heme pocket.

The protein belongs to the cytochrome P450 family. Heme serves as cofactor.

It localises to the membrane. It functions in the pathway secondary metabolite biosynthesis. Its function is as follows. Cytochrome P450 monooxygenase that is able to use 7-ethoxycoumarin and testosterone as substrates for oxidation. The chain is Cytochrome P450 monooxygenase 128 from Postia placenta (strain ATCC 44394 / Madison 698-R) (Brown rot fungus).